The chain runs to 407 residues: Putative colanic acid biosynthesis glycosyl transferase WcaI (407 aa).

It participates in slime biogenesis; slime polysaccharide biosynthesis. This is Putative colanic acid biosynthesis glycosyl transferase WcaI (wcaI) from Escherichia coli (strain K12).